The sequence spans 291 residues: Gamma-sarcoglycan (291 aa).

At 1 to 37 (MVREQYTTVTEGTHIERPENQHIYKIGIYGWRKRCLY) the chain is on the cytoplasmic side. A helical; Signal-anchor for type II membrane protein membrane pass occupies residues 38–58 (LFVLLLLAILVVNLALTIWIL). Residues 59 to 291 (KVMWFSPIGM…TCEEHSHVCL (233 aa)) are Extracellular-facing. Residue Asn-110 is glycosylated (N-linked (GlcNAc...) asparagine). 2 disulfides stabilise this stretch: Cys-265-Cys-290 and Cys-267-Cys-283.

It belongs to the sarcoglycan beta/delta/gamma/zeta family. Interacts with the syntrophin SNTA1 and FLNC. Cross-link to form 2 major subcomplexes: one consisting of SGCB, SGCD and SGCG and the other consisting of SGCB and SGCD. The association between SGCB and SGCG is particularly strong while SGCA is loosely associated with the other sarcoglycans. As to expression, most strongly expressed in skeletal and heart muscle. Also detected in proliferating myoblasts.

Its subcellular location is the cell membrane. It is found in the sarcolemma. It localises to the cytoplasm. The protein resides in the cytoskeleton. In terms of biological role, component of the sarcoglycan complex, a subcomplex of the dystrophin-glycoprotein complex which forms a link between the F-actin cytoskeleton and the extracellular matrix. This Mus musculus (Mouse) protein is Gamma-sarcoglycan (Sgcg).